Here is a 507-residue protein sequence, read N- to C-terminus: ATP synthase subunit alpha, chloroplastic (507 aa).

170–177 (GDRQTGKT) is an ATP binding site. Disordered stretches follow at residues 278-325 (PRRP…TQAG), 392-430 (EPEASAQFASDPDKATRNQSARGQRSRELLKQSQPAPLP), and 452-471 (GQVQGSPAQSREYLVTNKPE). Residues 282–303 (PGREAHPGDVPHLHPRPPERAA) are compositionally biased toward basic and acidic residues. The span at 305 to 322 (LSSQPGEGSTTASPTVET) shows a compositional bias: polar residues.

It belongs to the ATPase alpha/beta chains family. F-type ATPases have 2 components, CF(1) - the catalytic core - and CF(0) - the membrane proton channel. CF(1) has five subunits: alpha(3), beta(3), gamma(1), delta(1), epsilon(1). CF(0) has four main subunits: a, b, b' and c.

The protein localises to the plastid. It localises to the chloroplast thylakoid membrane. The enzyme catalyses ATP + H2O + 4 H(+)(in) = ADP + phosphate + 5 H(+)(out). Functionally, produces ATP from ADP in the presence of a proton gradient across the membrane. The alpha chain is a regulatory subunit. This chain is ATP synthase subunit alpha, chloroplastic, found in Selaginella uncinata (Blue spike-moss).